The primary structure comprises 196 residues: MLLLIDNYDSFTYNLVHYLGELGAELDVRRNDSLTVEEAMALRPEGIVLSPGPCDPDKAGICLPLIDAAAKAAVPLMGVCLGHQAIGQPFGGTVVRAPVPMHGKVDRMFHQGRGVLKDLPSPFRATRYHSLIVERATLPACLEVTGETEDGLIMALSHRELPIHGVQFHPESIESEHGHKILENFLNTTRRLETAA.

The Glutamine amidotransferase type-1 domain occupies 1-195 (MLLLIDNYDS…LNTTRRLETA (195 aa)). Residue 52–54 (GPC) coordinates L-glutamine. The active-site Nucleophile; for GATase activity is C80. L-glutamine is bound by residues Q84 and 130 to 131 (SL). Active-site for GATase activity residues include H169 and E171.

In terms of assembly, heterotetramer consisting of two non-identical subunits: a beta subunit (TrpG) and a large alpha subunit (TrpE).

The enzyme catalyses chorismate + L-glutamine = anthranilate + pyruvate + L-glutamate + H(+). It participates in amino-acid biosynthesis; L-tryptophan biosynthesis; L-tryptophan from chorismate: step 1/5. In terms of biological role, part of a heterotetrameric complex that catalyzes the two-step biosynthesis of anthranilate, an intermediate in the biosynthesis of L-tryptophan. In the first step, the glutamine-binding beta subunit (TrpG) of anthranilate synthase (AS) provides the glutamine amidotransferase activity which generates ammonia as a substrate that, along with chorismate, is used in the second step, catalyzed by the large alpha subunit of AS (TrpE) to produce anthranilate. In the absence of TrpG, TrpE can synthesize anthranilate directly from chorismate and high concentrations of ammonia. Participates in the tryptophan-dependent indole-3-acetic acid production, which is a phytohormone released by A.brasilense. The protein is Anthranilate synthase component 2 (trpG) of Azospirillum brasilense.